A 699-amino-acid chain; its full sequence is TPR repeat-containing thioredoxin TTL1 (699 aa).

Residues 1-211 (MPKSVKPISE…SSSRSSSTVA (211 aa)) form a disordered region. Basic and acidic residues predominate over residues 9 to 20 (SESDKLSDHLRD). Residues S39 and S42 each carry the phosphoserine modification. Low complexity-rich tracts occupy residues 52 to 70 (TTTT…SSGS) and 83 to 135 (RSNS…TSPA). The span at 166 to 182 (SGTGTYGHGSIMRGGGI) shows a compositional bias: gly residues. Residues 195-210 (NSPVNVGSSSRSSSTV) are compositionally biased toward low complexity. 7 TPR repeats span residues 227–260 (SEEV…SPTN), 262–294 (AYRS…DPNY), 296–328 (RAHH…SDPM), 419–452 (AYIY…DPRC), 465–498 (VARA…DPCN), 499–532 (AILY…QPSY), and 534–566 (KPLL…LPHD). The Thioredoxin domain maps to 605 to 691 (QFKSAMNLPG…IVCPSKEVLE (87 aa)).

Expressed in the root elongation zone, stele, root cap, embryo vascular system, leaf axilar buds, silique abscission zone and guard cells.

Functionally, involved in responses to osmotic stress and abscisic acid (ABA). May act as a positive regulator of ABA signaling during germination and seedling development under stress. The sequence is that of TPR repeat-containing thioredoxin TTL1 (TTL1) from Arabidopsis thaliana (Mouse-ear cress).